Consider the following 175-residue polypeptide: Putative metal-dependent hydrolase BPUM_0784 (175 aa).

Zn(2+) contacts are provided by H65, H157, and H161.

Belongs to the metal hydrolase YfiT family. Homodimer. Zn(2+) serves as cofactor.

The protein resides in the cytoplasm. Its function is as follows. Possible metal-dependent hydrolase. This is Putative metal-dependent hydrolase BPUM_0784 from Bacillus pumilus (strain SAFR-032).